A 193-amino-acid polypeptide reads, in one-letter code: Potassium-transporting ATPase KdpC subunit (193 aa).

A helical membrane pass occupies residues 7-27 (PLVVIFAVLTVVTGMAYPAVM).

Belongs to the KdpC family. In terms of assembly, the system is composed of three essential subunits: KdpA, KdpB and KdpC.

The protein resides in the cell inner membrane. Its function is as follows. Part of the high-affinity ATP-driven potassium transport (or Kdp) system, which catalyzes the hydrolysis of ATP coupled with the electrogenic transport of potassium into the cytoplasm. This subunit acts as a catalytic chaperone that increases the ATP-binding affinity of the ATP-hydrolyzing subunit KdpB by the formation of a transient KdpB/KdpC/ATP ternary complex. The chain is Potassium-transporting ATPase KdpC subunit from Burkholderia vietnamiensis (strain G4 / LMG 22486) (Burkholderia cepacia (strain R1808)).